Reading from the N-terminus, the 433-residue chain is Transcription factor TCP18 (433 aa).

2 disordered regions span residues 130–163 (QRIS…GTRD) and 247–281 (DDRG…RTPI). The TCP domain occupies 148-206 (RTDRHSKIKTAKGTRDRRMRLSLDVAKELFGLQDMLGFDKASKTVEWLLTQAKPEIIKI). Residues 287–304 (KEERAKARERAKGRTMEK) form the R domain.

Expressed in unelongated axillary buds, and, to a lower extent, in axillary structures such as flowers and siliques.

Its subcellular location is the nucleus. Transcription factor that prevents axillary bud outgrowth and delays early axillary bud development. Indirectly required for the auxin-induced control of apical dominance. The chain is Transcription factor TCP18 from Arabidopsis thaliana (Mouse-ear cress).